Here is a 287-residue protein sequence, read N- to C-terminus: ATP synthase gamma chain (287 aa).

Belongs to the ATPase gamma chain family. As to quaternary structure, F-type ATPases have 2 components, CF(1) - the catalytic core - and CF(0) - the membrane proton channel. CF(1) has five subunits: alpha(3), beta(3), gamma(1), delta(1), epsilon(1). CF(0) has three main subunits: a, b and c.

The protein localises to the cell inner membrane. In terms of biological role, produces ATP from ADP in the presence of a proton gradient across the membrane. The gamma chain is believed to be important in regulating ATPase activity and the flow of protons through the CF(0) complex. The chain is ATP synthase gamma chain from Sodalis glossinidius (strain morsitans).